The primary structure comprises 748 residues: Catalase-peroxidase (748 aa).

Residues 92 to 238 (WHSAGTYRTG…LAAVQMGLIY (147 aa)) constitute a cross-link (tryptophyl-tyrosyl-methioninium (Trp-Tyr) (with M-264)). The active-site Proton acceptor is the His-93. A cross-link (tryptophyl-tyrosyl-methioninium (Tyr-Met) (with W-92)) is located at residues 238 to 264 (YVNPEGPDGNPDPLLAAKDIRDTFGRM). Residue His-279 coordinates heme b.

This sequence belongs to the peroxidase family. Peroxidase/catalase subfamily. In terms of assembly, homodimer or homotetramer. Heme b serves as cofactor. In terms of processing, formation of the three residue Trp-Tyr-Met cross-link is important for the catalase, but not the peroxidase activity of the enzyme.

The enzyme catalyses H2O2 + AH2 = A + 2 H2O. It catalyses the reaction 2 H2O2 = O2 + 2 H2O. In terms of biological role, bifunctional enzyme with both catalase and broad-spectrum peroxidase activity. The chain is Catalase-peroxidase from Xanthomonas campestris pv. campestris (strain 8004).